Consider the following 363-residue polypeptide: Translocating chain-associated membrane protein 1-like 1 (363 aa).

The Cytoplasmic segment spans residues 1-29 (MGLRKKNARNPPVLSHEFMVQNHADMVSC). The chain crosses the membrane as a helical span at residues 30 to 50 (VGMFFVLGLMFEGTSEMSIAF). Over 51–80 (LTLQHGVVVPAEGLPSGSRTLYHYGVKDLA) the chain is Lumenal. The helical transmembrane segment at 81–101 (TVFFYMLVAIIIHATIQEYVL) threads the bilayer. The Cytoplasmic portion of the chain corresponds to 102-120 (DKLSRRLQLTKGKQNKLNE). The region spanning 116-324 (NKLNEAGQLS…TVWLQRWLED (209 aa)) is the TLC domain. A helical membrane pass occupies residues 121 to 141 (AGQLSVFYIVSGIWGMIILAS). Residues 142-159 (ENCLSDPTLLWKSQPHNM) are Lumenal-facing. Residues 160 to 179 (MTFQMKFFYISQLAYWFHSF) form a helical membrane-spanning segment. Residues 180-191 (PELYFQKVRKQD) are Cytoplasmic-facing. Residues 192 to 214 (IPGQLIYIGLHLFHIGGAYLLYL) traverse the membrane as a helical segment. At 215-218 (NHLG) the chain is on the lumenal side. The chain crosses the membrane as a helical span at residues 219-241 (LLLLMLHYAVELLSSVCSLLYFG). At 242–250 (DERYQKGLS) the chain is on the cytoplasmic side. The chain crosses the membrane as a helical span at residues 251–271 (LWPIVFISGRLVTLIVSVVTV). At 272-295 (GLHLAGTNRNGNALSGNVNVLAAK) the chain is on the lumenal side. Residues 296-316 (IAVLSSSCSIQVYITWTLTTV) form a helical membrane-spanning segment. The Cytoplasmic portion of the chain corresponds to 317–363 (WLQRWLEDANLHVCGRKRRSRARKGTENGVENPNRIDSPPKKKEKAP). A disordered region spans residues 338–363 (ARKGTENGVENPNRIDSPPKKKEKAP). The span at 354 to 363 (SPPKKKEKAP) shows a compositional bias: basic and acidic residues.

It belongs to the TRAM family.

It is found in the endoplasmic reticulum membrane. Functionally, stimulatory or required for the translocation of secretory proteins across the ER membrane. The sequence is that of Translocating chain-associated membrane protein 1-like 1 (Tram1l1) from Mus musculus (Mouse).